The chain runs to 185 residues: MKLVVGLGNPGKKYEHTRHNIGFDIIDRCAQKLDLPLDKQKFKAIYGEKRIGSEKVVLLKPLTYMNLSGEAVRPFMDYFNISNDELVVIYDDLDLPVGKIRLRKKGSAGGHNGIKSLIAHLGTEDFNRIRVGIGRPAHGEPVVHYVLDTYRKEELAFMNEAAEKSAKAIEAWLEKPFLEVMNTFN.

Y14 serves as a coordination point for tRNA. Residue H19 is the Proton acceptor of the active site. TRNA contacts are provided by Y64, N66, and N112.

The protein belongs to the PTH family. In terms of assembly, monomer.

The protein localises to the cytoplasm. It catalyses the reaction an N-acyl-L-alpha-aminoacyl-tRNA + H2O = an N-acyl-L-amino acid + a tRNA + H(+). Functionally, hydrolyzes ribosome-free peptidyl-tRNAs (with 1 or more amino acids incorporated), which drop off the ribosome during protein synthesis, or as a result of ribosome stalling. In terms of biological role, catalyzes the release of premature peptidyl moieties from peptidyl-tRNA molecules trapped in stalled 50S ribosomal subunits, and thus maintains levels of free tRNAs and 50S ribosomes. The protein is Peptidyl-tRNA hydrolase of Shouchella clausii (strain KSM-K16) (Alkalihalobacillus clausii).